Consider the following 191-residue polypeptide: Cytochrome b-245 light chain (191 aa).

Topologically, residues Gly-2–Ala-7 are cytoplasmic. Residues Met-8–Ala-30 traverse the membrane as a helical segment. The Extracellular portion of the chain corresponds to Gly-31–Gln-35. A helical transmembrane segment spans residues Trp-36–Glu-53. Residues Tyr-54–Gly-69 are Cytoplasmic-facing. An intramembrane segment occupies Gln-70 to Phe-80. At Gly-81–Asn-86 the chain is on the cytoplasmic side. A helical membrane pass occupies residues Tyr-87 to Leu-104. Leu-105 is a topological domain (extracellular). A helical transmembrane segment spans residues Ala-106–Ile-126. Topologically, residues Arg-127–Val-191 are cytoplasmic. The segment at Ile-134–Val-191 is disordered. Thr-147 carries the phosphothreonine modification. Lys-149 participates in a covalent cross-link: Glycyl lysine isopeptide (Lys-Gly) (interchain with G-Cter in ubiquitin). Ser-168 is modified (phosphoserine).

This sequence belongs to the p22phox family. As to quaternary structure, component of the phagocyte NADPH oxidase core complex/cytochrome b558 complex, composed of CYBB (heavy chain (beta)) and CYBA (light chain (alpha)). Component of the phagocyte NADPH oxidase complex composed of an obligatory core heterodimer formed by the membrane proteins CYBA and CYBB and the cytosolic regulatory subunits NCF1/p47-phox, NCF2/p67-phox, NCF4/p40-phox and the small GTPase RAC1 or RAC2. Interacts with NCF1 (via SH3 domain). Interacts with SH3PXD2A. Interacts with DUOX1, DUOX2 and TPO. Interacts with NOX4; this interaction mediates superoxide generation. Interacts with calprotectin (S100A8/9). Interacts with GBP7. Interacts with NOXO1. Forms a heterodimer with NOX3 and is essential for activity and cell membrane localization of NOX3. Interacts with NOX1. In terms of processing, phosphorylation at Thr-147 enhances NADPH oxidase activity by promoting NCF1/p47-phox binding. Post-translationally, ubiquitinated at Lys-149 likely by RNF145.

The protein resides in the cell membrane. In terms of biological role, subunit of NADPH oxidase complexes that is required for the NADPH oxidase activity that generates, in various cell types, superoxide from molecular oxygen utilizing NADPH as an electron donor. Subunit of the phagocyte NADPH oxidase complex that mediates the transfer of electrons from cytosolic NADPH to O2 to produce the superoxide anion (O2(-)). In the activated complex, electrons are first transferred from NADPH to flavin adenine dinucleotide (FAD) and subsequently transferred via two heme molecules to molecular oxygen, producing superoxide through an outer-sphere reaction. Activation of the NADPH oxidase complex is initiated by the assembly of cytosolic subunits of the NADPH oxidase complex with the core NADPH oxidase complex to form a complex at the plasma membrane or phagosomal membrane. This activation process is initiated by phosphorylation dependent binding of the cytosolic NCF1/p47-phox subunit to the C-terminus of CYBA/p22-phox. Aassociates with NOX3 to form a functional NADPH oxidase constitutively generating superoxide. The polypeptide is Cytochrome b-245 light chain (Bos taurus (Bovine)).